The chain runs to 128 residues: Large-conductance mechanosensitive channel (128 aa).

2 consecutive transmembrane segments (helical) span residues Phe-10 to Gly-30 and Gly-76 to Val-96.

The protein belongs to the MscL family. Homopentamer.

The protein localises to the cell inner membrane. Functionally, channel that opens in response to stretch forces in the membrane lipid bilayer. May participate in the regulation of osmotic pressure changes within the cell. The protein is Large-conductance mechanosensitive channel of Mannheimia succiniciproducens (strain KCTC 0769BP / MBEL55E).